The chain runs to 271 residues: Probable short-chain type dehydrogenase/reductase VdlC (271 aa).

1 to 25 (MAVITGASSGIGLECVLMLLNQGYK) contributes to the NAD(+) binding site. Substrate is bound at residue serine 129. Tyrosine 142 functions as the Proton acceptor in the catalytic mechanism.

Belongs to the short-chain dehydrogenases/reductases (SDR) family.

The chain is Probable short-chain type dehydrogenase/reductase VdlC (vdlC) from Helicobacter pylori (strain J99 / ATCC 700824) (Campylobacter pylori J99).